The sequence spans 358 residues: Replication-associated protein (358 aa).

In terms of domain architecture, CRESS-DNA virus Rep endonuclease spans 7–115 (RIQAKNVFLT…DGDTVEWGQF (109 aa)). An RCR-1 motif is present at residues 14 to 17 (FLTY). A divalent metal cation is bound by residues E48, H56, and H58. Residues 56–58 (HLH) carry the RCR-2 motif. Y102 (for DNA cleavage activity) is an active-site residue. Residues 102-105 (YLDK) carry the RCR-3 motif. D106 serves as a coordination point for a divalent metal cation. The binding to RBR1 stretch occupies residues 142 to 152 (KSEALNVIREL). The tract at residues 155–175 (KDFVLQFHNLNSNLDRIFQEP) is oligomerization. 220–227 (GDSRTGKT) contributes to the ATP binding site.

The protein belongs to the geminiviridae Rep protein family. Homooligomer. Interacts with the replication enhancer protein (REn). Interacts with host retinoblastoma-related protein 1 (RBR1), and may thereby induce the transcription of host replicative enzymes even if the cell is not dividing anymore. Interacts with host PCNA. Interacts with host SCE1 protein. Mg(2+) is required as a cofactor. Requires Mn(2+) as cofactor.

Its subcellular location is the host nucleus. In terms of biological role, essential for the replication of viral ssDNA. The closed circular ssDNA genome is first converted to a superhelical dsDNA. Rep binds a specific region at the genome origin of replication. It introduces an endonucleolytic nick within the conserved sequence 5'-TAATATTAC-3' in the intergenic region of the genome present in all geminiviruses, thereby initiating the rolling circle replication (RCR). Following cleavage, binds covalently to the 5'-phosphate of DNA as a tyrosyl ester. The cleavage gives rise to a free 3'-OH that serves as a primer for the cellular DNA polymerase. The polymerase synthesizes the (+) strand DNA by rolling circle mechanism. After one round of replication, a Rep-catalyzed nucleotidyl transfer reaction releases a circular single-stranded virus genome, thereby terminating the replication. Displays origin-specific DNA cleavage, nucleotidyl transferase, ATPase and helicase activities. In Hewittia sublobata (Coralbush), this protein is Replication-associated protein.